The chain runs to 218 residues: MNQQLLKEKVAAAVLEHVPENITLGVGSGSTVLCFIEALKQAKRQFRDIVAASETSSKALEAAGFRVRDLNACDPPDIYVDGADEINDDKIMIKGGGAALTREKIIASAAKEFICIIDESKKVAQLGRFPVAVEVIPMARSYVAREIVKLGAEPRWRQGVVTDNGHWILDVHYLDLTAAERMEARINTIAGVVECGIFAQRRADKVLMSQSDGEIVLW.

Substrate is bound by residues 28-31, 81-84, and 94-97; these read SGST, DGAD, and KGGG. E103 (proton acceptor) is an active-site residue. K121 provides a ligand contact to substrate.

The protein belongs to the ribose 5-phosphate isomerase family. Homodimer.

It carries out the reaction aldehydo-D-ribose 5-phosphate = D-ribulose 5-phosphate. It participates in carbohydrate degradation; pentose phosphate pathway; D-ribose 5-phosphate from D-ribulose 5-phosphate (non-oxidative stage): step 1/1. Catalyzes the reversible conversion of ribose-5-phosphate to ribulose 5-phosphate. The protein is Ribose-5-phosphate isomerase A of Dichelobacter nodosus (strain VCS1703A).